The following is a 313-amino-acid chain: Homeobox protein CDX-2 (313 aa).

At serine 60 the chain carries Phosphoserine. The segment at 113 to 153 (HAHHHPHHHPHHPAAAPSCASGLLQTLNPGPPGPAATGAAE) is disordered. The segment covering 114-124 (AHHHPHHHPHH) has biased composition (basic residues). The tract at residues 185–215 (KDKYRVVYTDHQRLELEKEFHYSRYITIRRK) is interaction with DNA. The segment at residues 185–244 (KDKYRVVYTDHQRLELEKEFHYSRYITIRRKAELAATLGLSERQVKIWFQNRRAKERKIN) is a DNA-binding region (homeobox). Positions 227 to 241 (RQVKIWFQNRRAKER) are interaction with 5-mCpG DNA. The segment at 242–313 (KINKKKLQQQ…GGVLNPTVTQ (72 aa)) is disordered. Composition is skewed to low complexity over residues 249–261 (QQQQ…QQLA) and 271–300 (QPGS…PGVL). The residue at position 283 (serine 283) is a Phosphoserine. The 4S motif; modulates transactivation activity and protein stability motif lies at 283 to 295 (SPVSSLQGSVPGS).

It belongs to the Caudal homeobox family. In terms of assembly, can bind DNA as a monomer or homodimer. Ubiquitinated, leading to its degradation by the proteasome. In terms of processing, phosphorylation at Ser-60 reduces transactivation capacity. Phosphorylation at Ser-283 reduces transactivation capacity and also increases ubiquitin-dependent proteasome degradation. As to expression, expressed in the intestine.

The protein localises to the nucleus. Its function is as follows. Transcription factor which regulates the transcription of multiple genes expressed in the intestinal epithelium. Binds to the promoter of the intestinal sucrase-isomaltase SI and activates SI transcription. Binds to the DNA sequence 5'-ATAAAAACTTAT-3' in the promoter region of VDR and activates VDR transcription. Binds to and activates transcription of LPH. Activates transcription of CLDN2 and intestinal mucin MUC2. Binds to the 5'-AATTTTTTACAACACCT-3' DNA sequence in the promoter region of CA1 and activates CA1 transcription. Important in broad range of functions from early differentiation to maintenance of the intestinal epithelial lining of both the small and large intestine. Binds preferentially to methylated DNA. This is Homeobox protein CDX-2 (CDX2) from Mesocricetus auratus (Golden hamster).